Reading from the N-terminus, the 440-residue chain is MTQNYVYIETFGCQMNVNDSERILTMLADIGYVPTQEPARARLILLNTCSVRAGAEEKVYRRLENLVVLKRHNSRLIIGVGGCVAQQEGEALLERIPKLDLVFGTHNLHLLNDMVLAAERGERKSETSFIDNDQRLDLFPPIRGTARISSFVTVMQGCENYCSYCIVPYVRGPEVSRRSGDILREVRQLADQGVREVALLGQNVNSYGLKSSAEPSFAELIRLVAAVDGIRRIRFFTSHPKDMSPELIACFGDLPALCSQLHLPAQSGSDNVLARMGRGYTREEYLEKVRALRAVRPDIVFTGDMIVGFPGETEEEFQETLSLMEEVRYIDLFSFAYSPRPGTRAAELADDLSRGEKQSRLERLQALQKRTTMEINDVLLGTRQTVLVEREGKRPGQISGKADNGRTVNFSGDRSLIGTFVDLRIIQVFQNSLLGELLPG.

The 117-residue stretch at 4–120 folds into the MTTase N-terminal domain; it reads NYVYIETFGC…LNDMVLAAER (117 aa). 6 residues coordinate [4Fe-4S] cluster: Cys13, Cys49, Cys83, Cys158, Cys162, and Cys165. A Radical SAM core domain is found at 144 to 374; sequence GTARISSFVT…QALQKRTTME (231 aa). The TRAM domain occupies 377–439; sequence DVLLGTRQTV…QNSLLGELLP (63 aa).

The protein belongs to the methylthiotransferase family. MiaB subfamily. As to quaternary structure, monomer. Requires [4Fe-4S] cluster as cofactor.

It is found in the cytoplasm. It carries out the reaction N(6)-dimethylallyladenosine(37) in tRNA + (sulfur carrier)-SH + AH2 + 2 S-adenosyl-L-methionine = 2-methylsulfanyl-N(6)-dimethylallyladenosine(37) in tRNA + (sulfur carrier)-H + 5'-deoxyadenosine + L-methionine + A + S-adenosyl-L-homocysteine + 2 H(+). Its function is as follows. Catalyzes the methylthiolation of N6-(dimethylallyl)adenosine (i(6)A), leading to the formation of 2-methylthio-N6-(dimethylallyl)adenosine (ms(2)i(6)A) at position 37 in tRNAs that read codons beginning with uridine. In Pelobacter propionicus (strain DSM 2379 / NBRC 103807 / OttBd1), this protein is tRNA-2-methylthio-N(6)-dimethylallyladenosine synthase.